The chain runs to 97 residues: uncharacterized protein (97 aa).

Positions 1 to 20 (MAKEQTDRTTLDLFAHERRP) are enriched in basic and acidic residues. Residues 1–30 (MAKEQTDRTTLDLFAHERRPGRPKTNPLSR) form a disordered region.

This is an uncharacterized protein from Escherichia coli O157:H7.